Consider the following 677-residue polypeptide: Protein PALS1 (677 aa).

The interval Met-1 to Glu-347 is required for the correct localization of PALS1 and PATJ at cell-cell contacts and the normal formation of tight junctions and adherens junctions. Positions Glu-39–Ser-81 are disordered. Over residues Ala-51 to Leu-76 the composition is skewed to basic and acidic residues. L27 domains are found at residues Ala-121–Ser-178 and Pro-180–Glu-236. The PDZ domain maps to Ile-258–Ala-338. The SH3 domain occupies Glu-347–Glu-419. One can recognise a Guanylate kinase-like domain in the interval Lys-481–Asn-662. An ATP-binding site is contributed by Gly-488–Asn-495. Positions Pro-506–Asn-526 are disordered.

This sequence belongs to the MAGUK family. As to expression, expressed in the retina and in the neural tube.

It localises to the apical cell membrane. The protein resides in the cell junction. Its subcellular location is the tight junction. Plays a role in tight junction biogenesis and in the establishment of cell polarity in epithelial cells. Also involved in adherens junction biogenesis. Required for polarized epithelial organization, cell-cell adhesion and remodeling of myocardial cells during heart tube elongation during embryogenesis. Functions in cellular patterning of the retina and development of the retinal pigmented epithelium. Also required for embryo body axis specification. This Danio rerio (Zebrafish) protein is Protein PALS1 (pals1a).